Here is a 174-residue protein sequence, read N- to C-terminus: Large ribosomal subunit protein uL10 (174 aa).

It belongs to the universal ribosomal protein uL10 family. Part of the ribosomal stalk of the 50S ribosomal subunit. The N-terminus interacts with L11 and the large rRNA to form the base of the stalk. The C-terminus forms an elongated spine to which L12 dimers bind in a sequential fashion forming a multimeric L10(L12)X complex.

Forms part of the ribosomal stalk, playing a central role in the interaction of the ribosome with GTP-bound translation factors. This is Large ribosomal subunit protein uL10 from Geobacter metallireducens (strain ATCC 53774 / DSM 7210 / GS-15).